Here is a 405-residue protein sequence, read N- to C-terminus: Mitochondrial outer membrane protein SLC25A46 (405 aa).

A disordered region spans residues methionine 1 to proline 77. The segment covering phenylalanine 22–serine 37 has biased composition (low complexity). Residues glutamine 80–proline 171 form a Solcar 1 repeat. Helical transmembrane passes span phenylalanine 87–phenylalanine 107, phenylalanine 151–proline 171, valine 183–alanine 203, leucine 242–isoleucine 262, phenylalanine 302–leucine 322, and methionine 371–leucine 391. Residues aspartate 299–leucine 401 form a Solcar 2 repeat.

This sequence belongs to the mitochondrial carrier (TC 2.A.29) family.

It is found in the mitochondrion outer membrane. Functionally, transmembrane protein of the mitochondrial outer membrane that controls mitochondrial organization. May regulate the biogenesis and dynamics of mitochondrial cristae, the inwards folds of the inner mitochondrial membrane. Could regulate mitochondrial lipid homeostasis and thereby mitochondrial fission. This is Mitochondrial outer membrane protein SLC25A46 (slc25a46) from Danio rerio (Zebrafish).